The following is a 410-amino-acid chain: Serine proteinase inhibitor A3K (410 aa).

Positions 1 to 24 (MPSAISRGLLLLAGLCYLVFGIMA) are cleaved as a signal peptide. N-linked (GlcNAc...) asparagine glycosylation is found at asparagine 62, asparagine 99, asparagine 162, asparagine 229, and asparagine 263. An RCL region spans residues 360–381 (GTEAAAATVLEATRTARPPRLS).

Belongs to the serpin family.

Its subcellular location is the secreted. The protein resides in the extracellular space. Contrapsin inhibits trypsin-like proteases. This chain is Serine proteinase inhibitor A3K (SERPINA3K), found in Cavia porcellus (Guinea pig).